Consider the following 446-residue polypeptide: Chromosomal replication initiator protein DnaA (446 aa).

The segment at 1 to 92 (MENISDLWNS…SQAEEEIDLP (92 aa)) is domain I, interacts with DnaA modulators. Residues 93 to 109 (PSKPNAAQDDSNHLPQS) are domain II. The tract at residues 110–326 (MLNPKYTFDT…GALIRVVAYS (217 aa)) is domain III, AAA+ region. Glycine 154, glycine 156, lysine 157, and threonine 158 together coordinate ATP. Positions 327-446 (SLINKDINAD…QVEEINDILK (120 aa)) are domain IV, binds dsDNA.

It belongs to the DnaA family. In terms of assembly, oligomerizes as a right-handed, spiral filament on DNA at oriC.

It is found in the cytoplasm. Its function is as follows. Plays an essential role in the initiation and regulation of chromosomal replication. ATP-DnaA binds to the origin of replication (oriC) to initiate formation of the DNA replication initiation complex once per cell cycle. Binds the DnaA box (a 9 base pair repeat at the origin) and separates the double-stranded (ds)DNA. Forms a right-handed helical filament on oriC DNA; dsDNA binds to the exterior of the filament while single-stranded (ss)DNA is stabiized in the filament's interior. The ATP-DnaA-oriC complex binds and stabilizes one strand of the AT-rich DNA unwinding element (DUE), permitting loading of DNA polymerase. After initiation quickly degrades to an ADP-DnaA complex that is not apt for DNA replication. Binds acidic phospholipids. This is Chromosomal replication initiator protein DnaA from Bacillus cereus (strain 03BB102).